A 255-amino-acid chain; its full sequence is 5'-nucleotidase SurE (255 aa).

A divalent metal cation contacts are provided by D8, D9, S40, and N93.

The protein belongs to the SurE nucleotidase family. It depends on a divalent metal cation as a cofactor.

It localises to the cytoplasm. It carries out the reaction a ribonucleoside 5'-phosphate + H2O = a ribonucleoside + phosphate. Functionally, nucleotidase that shows phosphatase activity on nucleoside 5'-monophosphates. This Nitrobacter hamburgensis (strain DSM 10229 / NCIMB 13809 / X14) protein is 5'-nucleotidase SurE.